A 1388-amino-acid polypeptide reads, in one-letter code: MDDAGEICSFSRSSSSAREDDEEDQRWAALEKLPTYDRARTALLAMPPDGELREVNVQRLAAVERRALLQRVAGVADDHARFLAKFKERVDRVGIKLPTVEVRYENLNIEAESYVGRRGLPTILNTYTIIMEGLTNALCITKKITHKIPILHNVSGIIKPHRMTLLLGPPGSGKTSLLLALAGTSTLKVSGTITYNGHSMEEFVPQRSAAYVSQHDVHMAELTVRETVNFAAKCQGVGHHYDLLMELLRREKEQNIKPDPEIDIYLKAATTGEQKAEVVTNHILKILGLDICADTIVGNNMLRGISGGQKKRLTTAEMIVTPGRALFMDEISTGLDSSTTFQIVNTIRQTIRILGGTAVIALLQPAPETYELFDDIILLSDGQVVYNGPRDHVLEFFKSVGFKCPERKCVADFLQEVTSRKDQKQYWIGSDDTYQYVPVTMIAEAFQSFHVGQAIRSELAIPFEKSKNHPAALATSKYGVSMKELLKANIYREILLMKRNSFLYIFKAIQLKLVAINAMTVFIRTNMYRDSIENGRSYMGALFYGMMMIVYSALAEMGPAIAKLPVLFKQRDLLYYPSWTYSLPSWIIKIPISFLNTTVWVFLTYYVIGFDPNVLRFFRQFLVLFVLCEVIYALFRFIVALTRHPVIASNMGPFCILIFMLSCGFILTRDDVKKWWIWLYWISPLMYALNALAVNEFLGQIWNKSILGYKGPLGRLVLGSSSFLPETKWYWISIGALLGYVLLFNVLYTICLTFLTHAKEIINDEANSYHATRHSSAGNKGMVLPFVPLSITFEDIRYSVDTPEAFKAKGMTEGRLELLKDISGSFRQGVLTALMGVSGAGKTTLLDVLAGRKTSGYVQGSITISGYPKKQETFARISGYCEQNDIHSPNVTVYESLMFSAWLRLPVEIDSATRKMFVYEVMELVEILSLKDALVGLPGVSGLSSERRKRLTIAVELVANPSIIFMDEPTSGLDARAAAIVMRAIRNTVDTGRTVVCTIHQPSIEIFESFDELFLMKQGGEEIYVGPIGRQSCELIKYFEAIQGVSKIKDGYNPSTWMLEVTSTTQEQRTCVDFSQIYKNSELYRRNKNLIKELSAPPEGSSDLSFPTQYSQLFLTQWLACLWKQHLSYWRNPPYIVVRYLFTIVVALLFGTMFWGIGKKRQNQQTLFSIMGAMYSACMAMGVQNSSSVQPAIFVERTIFYRERASHMYSALSYALGQVAIEFPYIFLQTIIYCVLVYAMVGYEWTCAKFLWYLFFMFFTLSYFTFYGMMMAGLTPNNAMSAVVSTAFYNIWNLFSGFLIPRIRIPVWWRWYYWMCPVAWTLNGLLTSQFGDVNDKFNNGVSVSDFIESYFGYKQDLLWVAAVAVVSFAILFAFLFGLSLRLFNFQKR.

The interval Met1–Asp24 is disordered. Positions Thr135–Glu406 constitute an ABC transporter 1 domain. Gly168–Thr175 provides a ligand contact to ATP. Positions Glu484–Phe697 constitute an ABC transmembrane type-2 1 domain. The next 7 helical transmembrane spans lie at Leu503–Ile523, Ala541–Ile561, Ile590–Phe610, Phe621–Leu641, Val646–Ile666, Trp675–Asn695, and Ile732–Leu752. Residues Ile791–Gln1043 enclose the ABC transporter 2 domain. Residue Gly836 to Thr843 participates in ATP binding. Positions Thr1116 to Phe1330 constitute an ABC transmembrane type-2 2 domain. Helical transmembrane passes span Ile1136–Gly1156, Leu1167–Val1183, Phe1223–Tyr1243, Phe1250–Met1270, Met1280–Ile1300, Ile1305–Leu1325, and Leu1357–Gly1377.

This sequence belongs to the ABC transporter superfamily. ABCG family. PDR (TC 3.A.1.205) subfamily.

It is found in the membrane. May be a general defense protein. This is ABC transporter G family member 52 from Oryza sativa subsp. japonica (Rice).